We begin with the raw amino-acid sequence, 554 residues long: Intraflagellar transport protein 56 (554 aa).

Residues 1–27 form a disordered region; the sequence is MMLSRAKPAVGGESPHTDKRKKKGRKI. Residues 18–27 show a composition bias toward basic residues; that stretch reads DKRKKKGRKI. 4 TPR repeats span residues 57 to 90, 92 to 125, 151 to 184, and 468 to 501; these read EDTN…ENCN, EVWV…LQNR, KEDQ…NREY, and ANDC…EGKR.

It belongs to the IFT56 family. In terms of assembly, component of the IFT complex B. Interacts with IFT46; the interaction is direct.

It localises to the cell projection. The protein resides in the cilium. In terms of biological role, component of the intraflagellar transport (IFT) complex B required for transport of proteins in the motile cilium. Required for transport of specific ciliary cargo proteins related to motility, while it is neither required for IFT complex B assembly or motion nor for cilium assembly. Required for efficient coupling between the accumulation of GLI2 and GLI3 at the ciliary tips and their dissociation from the negative regulator SUFU. Plays a key role in maintaining the integrity of the IFT complex B and the proper ciliary localization of the IFT complex B components. Not required for IFT complex A ciliary localization or function. Essential for maintaining proper microtubule organization within the ciliary axoneme. The sequence is that of Intraflagellar transport protein 56 from Rattus norvegicus (Rat).